The chain runs to 409 residues: Shaggy-related protein kinase gamma (409 aa).

Ala2 carries the N-acetylalanine modification. One can recognise a Protein kinase domain in the interval 73 to 357 (YMAERVVGHG…ALDSLVHPFF (285 aa)). ATP is bound by residues 79 to 87 (VGHGSFGVV) and Lys102. The active-site Proton acceptor is Asp198. Tyr233 is subject to Phosphotyrosine.

It belongs to the protein kinase superfamily. CMGC Ser/Thr protein kinase family. GSK-3 subfamily. Binds to KIB1. Component of a complex made of POLAR, BASL, ASK7/BIN2 and ASK3/SK12. Binds to POLAR and BASL. In terms of processing, autophosphorylated mainly on threonine and serine residues. Roots, shoots and leaves.

The protein resides in the cytoplasm. Its subcellular location is the cell cortex. It carries out the reaction L-seryl-[protein] + ATP = O-phospho-L-seryl-[protein] + ADP + H(+). It catalyses the reaction L-threonyl-[protein] + ATP = O-phospho-L-threonyl-[protein] + ADP + H(+). May mediate extracellular signals to regulate transcription in differentiating cells. Probably involved first at the cortical polarity site, to restrict MAPK signaling and promote asymmetric cell division (ACD), and second in the nucleus of stomatal lineage ground cells (SLGCs) or meristemoids, to limit cell division and to promote differentiation into pavement or stomatal guard cells, respectively. Phosphorylate YDA and SPCH in vitro. The chain is Shaggy-related protein kinase gamma from Arabidopsis thaliana (Mouse-ear cress).